The following is a 316-amino-acid chain: Delta(1)-pyrroline-2-carboxylate reductase (316 aa).

Belongs to the ornithine cyclodeaminase/mu-crystallin family.

The enzyme catalyses L-proline + NAD(+) = 1-pyrroline-2-carboxylate + NADH + H(+). The catalysed reaction is L-proline + NADP(+) = 1-pyrroline-2-carboxylate + NADPH + H(+). Catalyzes the reduction of Delta(1)-pyrroline-2-carboxylate (Pyr2C) to L-proline, using preferentially NADPH over NADH as the electron donor. Is likely involved in a degradation pathway that converts trans-3-hydroxy-L-proline (t3LHyp) to L-proline, which would allow P.denitrificans to grow on t3LHyp as a sole carbon source. This chain is Delta(1)-pyrroline-2-carboxylate reductase, found in Paracoccus denitrificans (strain Pd 1222).